Reading from the N-terminus, the 348-residue chain is Fructose-1,6-bisphosphatase class 1 2 (348 aa).

Positions 93, 117, 119, and 120 each coordinate Mg(2+). Substrate is bound by residues 120 to 123 (DGSS), asparagine 213, tyrosine 244, and lysine 274. Residue glutamate 280 participates in Mg(2+) binding.

Belongs to the FBPase class 1 family. Homotetramer. Mg(2+) serves as cofactor.

It is found in the cytoplasm. It catalyses the reaction beta-D-fructose 1,6-bisphosphate + H2O = beta-D-fructose 6-phosphate + phosphate. Its pathway is carbohydrate biosynthesis; gluconeogenesis. This is Fructose-1,6-bisphosphatase class 1 2 from Christiangramia forsetii (strain DSM 17595 / CGMCC 1.15422 / KT0803) (Gramella forsetii).